The sequence spans 101 residues: MMLEHVLVLSAYLLSIGIYGLITSRNMVRALMCLELILNAVNMNFVTFSDLFDSRQIKGDIFSIFVIAIAAAEAAIGLAIVSSIYRNRKSTRINQSNLLNK.

A run of 3 helical transmembrane segments spans residues 2–22, 32–52, and 61–81; these read MLEH…YGLI, MCLE…SDLF, and IFSI…LAIV.

Belongs to the complex I subunit 4L family. In terms of assembly, NDH is composed of at least 16 different subunits, 5 of which are encoded in the nucleus.

It is found in the plastid. The protein localises to the chloroplast thylakoid membrane. It carries out the reaction a plastoquinone + NADH + (n+1) H(+)(in) = a plastoquinol + NAD(+) + n H(+)(out). It catalyses the reaction a plastoquinone + NADPH + (n+1) H(+)(in) = a plastoquinol + NADP(+) + n H(+)(out). NDH shuttles electrons from NAD(P)H:plastoquinone, via FMN and iron-sulfur (Fe-S) centers, to quinones in the photosynthetic chain and possibly in a chloroplast respiratory chain. The immediate electron acceptor for the enzyme in this species is believed to be plastoquinone. Couples the redox reaction to proton translocation, and thus conserves the redox energy in a proton gradient. This is NAD(P)H-quinone oxidoreductase subunit 4L, chloroplastic from Nandina domestica (Heavenly bamboo).